The primary structure comprises 122 residues: Large ribosomal subunit protein bL12 (122 aa).

It belongs to the bacterial ribosomal protein bL12 family. In terms of assembly, homodimer. Part of the ribosomal stalk of the 50S ribosomal subunit. Forms a multimeric L10(L12)X complex, where L10 forms an elongated spine to which 2 to 4 L12 dimers bind in a sequential fashion. Binds GTP-bound translation factors.

Forms part of the ribosomal stalk which helps the ribosome interact with GTP-bound translation factors. Is thus essential for accurate translation. This is Large ribosomal subunit protein bL12 from Shewanella loihica (strain ATCC BAA-1088 / PV-4).